Reading from the N-terminus, the 478-residue chain is Argininosuccinate lyase (478 aa).

Belongs to the lyase 1 family. Argininosuccinate lyase subfamily.

It localises to the cytoplasm. It catalyses the reaction 2-(N(omega)-L-arginino)succinate = fumarate + L-arginine. It functions in the pathway amino-acid biosynthesis; L-arginine biosynthesis; L-arginine from L-ornithine and carbamoyl phosphate: step 3/3. The polypeptide is Argininosuccinate lyase (Leptospira biflexa serovar Patoc (strain Patoc 1 / Ames)).